Reading from the N-terminus, the 394-residue chain is Arogenate dehydratase 2 (394 aa).

The tract at residues 1–24 (MAATTTLRSPKIPHPPPESTPSNL) is disordered. The N-terminal 47 residues, 1-47 (MAATTTLRSPKIPHPPPESTPSNLSYLSQISLTPVPKRRRFISIYAC), are a transit peptide targeting the chloroplast. Residues 108–283 (RVAYQGVRGA…NVTRFLMLAR (176 aa)) form the Prephenate dehydratase domain. The ACT domain occupies 297 to 388 (SVVFSLDEGP…TFLRVLGSYP (92 aa)).

As to expression, expressed at low levels in petals (corollas and tubes), stems, leaves, pistils, stamens, ovaries and sepals.

The protein localises to the plastid. It is found in the chloroplast stroma. The catalysed reaction is prephenate + H(+) = 3-phenylpyruvate + CO2 + H2O. It carries out the reaction L-arogenate + H(+) = L-phenylalanine + CO2 + H2O. It participates in amino-acid biosynthesis; L-phenylalanine biosynthesis; L-phenylalanine from L-arogenate: step 1/1. Its function is as follows. Converts the prephenate and L-arogenate produced from the shikimate-chorismate pathway into 3-phenylpyruvate and phenylalanine (Phe), respectively. Involved in floral volatile benzenoids and phenylpropanoids (FVBP) production. This Petunia hybrida (Petunia) protein is Arogenate dehydratase 2.